We begin with the raw amino-acid sequence, 226 residues long: Phosphoglycolate phosphatase (226 aa).

Asp8 acts as the Nucleophile in catalysis. Positions 8 and 10 each coordinate Mg(2+). Position 152 (Lys152) interacts with substrate. 2 residues coordinate Mg(2+): Asp175 and Asp179.

Belongs to the archaeal SPP-like hydrolase family. Requires Mg(2+) as cofactor.

The enzyme catalyses 2-phosphoglycolate + H2O = glycolate + phosphate. Its function is as follows. Catalyzes the dephosphorylation of 2-phosphoglycolate. The chain is Phosphoglycolate phosphatase from Natronomonas pharaonis (strain ATCC 35678 / DSM 2160 / CIP 103997 / JCM 8858 / NBRC 14720 / NCIMB 2260 / Gabara) (Halobacterium pharaonis).